Consider the following 238-residue polypeptide: Proenkephalin-A (238 aa).

The first 25 residues, 1-25 (MAASALSTCLWMLVLGTCVSLVVGT), serve as a signal peptide directing secretion. 3 disulfide bridges follow: Cys27/Cys50, Cys31/Cys54, and Cys34/Cys66. The disordered stretch occupies residues 76-103 (QSPLASQQDQERVDAMMADEEDATSPEH). 3 propeptides span residues 124–167 (SSAS…AEAV), 177–195 (ADRG…GRVL), and 206–230 (VGRP…SELQ).

Belongs to the opioid neuropeptide precursor family. In terms of tissue distribution, expressed by the venom gland. Moderately expressed in the venom gland transcriptome.

The protein localises to the secreted. Its function is as follows. Met-enkephalins compete with and mimic the effects of opiate drugs. They play a role in a number of physiologic functions, including pain perception and responses to stress. Enkephalin peptides found in Meiacanthus fangblennies induce physiological effects via their interaction with delta-type opioid receptors (OPRD1) (tested on M.grammistes). Therefore, finding a proenkephalin sequence in M.atrodorsalis venom suggests that this protein act in the same manner. The protein is Proenkephalin-A of Meiacanthus atrodorsalis (Forktail blenny).